The primary structure comprises 68 residues: Large ribosomal subunit protein uL29 (68 aa).

It belongs to the universal ribosomal protein uL29 family.

The sequence is that of Large ribosomal subunit protein uL29 from Chlorobaculum parvum (strain DSM 263 / NCIMB 8327) (Chlorobium vibrioforme subsp. thiosulfatophilum).